We begin with the raw amino-acid sequence, 419 residues long: Endochitinase 2 (419 aa).

The first 18 residues, Met-1–Gly-18, serve as a signal peptide directing secretion. Residues Ala-35–Gly-343 enclose the GH18 domain. A glycan (N-linked (GlcNAc...) asparagine) is linked at Asn-153. The active-site Proton donor is the Glu-173. 2 N-linked (GlcNAc...) asparagine glycosylation sites follow: Asn-237 and Asn-256. Positions Gly-350–Thr-381 are enriched in low complexity. The disordered stretch occupies residues Gly-350–Pro-386. A CBM1 domain is found at Gly-383–Arg-419.

This sequence belongs to the glycosyl hydrolase 18 family. Chitinase class III subfamily.

Its subcellular location is the secreted. The catalysed reaction is Random endo-hydrolysis of N-acetyl-beta-D-glucosaminide (1-&gt;4)-beta-linkages in chitin and chitodextrins.. In terms of biological role, secreted chitinase involved in the degradation of chitin, a component of the cell walls of fungi and exoskeletal elements of some animals (including worms and arthropods). Participates in the infection process and directly acts in the penetration process of the host cuticle. This is Endochitinase 2 (chi2) from Metarhizium robertsii (strain ARSEF 23 / ATCC MYA-3075) (Metarhizium anisopliae (strain ARSEF 23)).